The sequence spans 177 residues: Ribonuclease H (177 aa).

The RNase H type-1 domain maps to 1-142; it reads MSKQVEIFTD…ADELAREGMA (142 aa). Asp-10, Glu-48, Asp-70, and Asp-134 together coordinate Mg(2+). Over residues 126-138 the composition is skewed to basic and acidic residues; that stretch reads GHTENERADELAR. The tract at residues 126–177 is disordered; that stretch reads GHTENERADELAREGMAPFKKGSFKPAASAPKPDAQLKQPVATKARRSTQSY.

This sequence belongs to the RNase H family. In terms of assembly, monomer. Mg(2+) serves as cofactor.

It is found in the cytoplasm. It carries out the reaction Endonucleolytic cleavage to 5'-phosphomonoester.. Functionally, endonuclease that specifically degrades the RNA of RNA-DNA hybrids. This is Ribonuclease H from Mesorhizobium japonicum (strain LMG 29417 / CECT 9101 / MAFF 303099) (Mesorhizobium loti (strain MAFF 303099)).